Consider the following 177-residue polypeptide: Thioredoxin M-type, chloroplastic (177 aa).

A chloroplast-targeting transit peptide spans 1 to 64; sequence MAAFTCTSSP…SRLRRGGIIC (64 aa). The region spanning 65–177 is the Thioredoxin domain; sequence EAQDTATGIP…LATSIDKFLQ (113 aa). Catalysis depends on nucleophile residues Cys101 and Cys104. Cys101 and Cys104 form a disulfide bridge.

It belongs to the thioredoxin family. Plant M-type subfamily. In terms of assembly, forms a complex with heterodimeric ferredoxin-thioredoxin reductase (FTR) and ferredoxin.

It is found in the plastid. It localises to the chloroplast. Functionally, participates in various redox reactions through the reversible oxidation of the active center dithiol to a disulfide. The M form is known to activate NADP-malate dehydrogenase. In Brassica napus (Rape), this protein is Thioredoxin M-type, chloroplastic.